The chain runs to 365 residues: Carboxynorspermidine/carboxyspermidine decarboxylase (365 aa).

N6-(pyridoxal phosphate)lysine is present on Lys37. Substrate is bound by residues Glu233 and Asp269.

This sequence belongs to the Orn/Lys/Arg decarboxylase class-II family. NspC subfamily. As to quaternary structure, homodimer. It depends on pyridoxal 5'-phosphate as a cofactor.

The protein resides in the cytoplasm. The catalysed reaction is carboxynorspermidine + H(+) = norspermidine + CO2. The enzyme catalyses carboxyspermidine + H(+) = spermidine + CO2. Functionally, catalyzes the decarboxylation of carboxynorspermidine and carboxyspermidine. The sequence is that of Carboxynorspermidine/carboxyspermidine decarboxylase from Herminiimonas arsenicoxydans.